The sequence spans 216 residues: Thymidylate kinase (216 aa).

10 to 17 serves as a coordination point for ATP; that stretch reads GIDGCGKT.

It belongs to the thymidylate kinase family.

The catalysed reaction is dTMP + ATP = dTDP + ADP. Functionally, phosphorylation of dTMP to form dTDP in both de novo and salvage pathways of dTTP synthesis. This Prochlorococcus marinus (strain MIT 9303) protein is Thymidylate kinase.